The chain runs to 479 residues: F-box protein At5g51380 (479 aa).

Positions 1-20 (MTFREKMPTSPKSPLRRRRS) are disordered. The F-box domain maps to 62 to 108 (DRTLSLSDSLLLKILEKLPESQNEDVSLVCKRWLSVQGRRLRSMKVF).

In Arabidopsis thaliana (Mouse-ear cress), this protein is F-box protein At5g51380.